Here is a 28-residue protein sequence, read N- to C-terminus: Conotoxin Cl9b (28 aa).

2 positions are modified to 4-hydroxyproline: Pro-17 and Pro-28.

In terms of processing, contains 3 disulfide bonds. In terms of tissue distribution, expressed by the venom duct.

The protein localises to the secreted. The chain is Conotoxin Cl9b from Californiconus californicus (California cone).